Consider the following 294-residue polypeptide: Ribosomal RNA small subunit methyltransferase A (294 aa).

S-adenosyl-L-methionine is bound by residues asparagine 29, valine 31, glycine 56, glutamate 77, aspartate 107, and asparagine 126.

It belongs to the class I-like SAM-binding methyltransferase superfamily. rRNA adenine N(6)-methyltransferase family. RsmA subfamily.

It localises to the cytoplasm. The enzyme catalyses adenosine(1518)/adenosine(1519) in 16S rRNA + 4 S-adenosyl-L-methionine = N(6)-dimethyladenosine(1518)/N(6)-dimethyladenosine(1519) in 16S rRNA + 4 S-adenosyl-L-homocysteine + 4 H(+). Specifically dimethylates two adjacent adenosines (A1518 and A1519) in the loop of a conserved hairpin near the 3'-end of 16S rRNA in the 30S particle. May play a critical role in biogenesis of 30S subunits. In Mycobacterium sp. (strain MCS), this protein is Ribosomal RNA small subunit methyltransferase A.